We begin with the raw amino-acid sequence, 188 residues long: Photosystem I assembly protein Ycf4 (188 aa).

2 helical membrane passes run 28 to 48 (WATVITIGGTGFFLAGLSSYL) and 68 to 88 (IAIGFYGVAALLLAIYLWATI).

The protein belongs to the Ycf4 family.

It is found in the cellular thylakoid membrane. Its function is as follows. Seems to be required for the assembly of the photosystem I complex. The polypeptide is Photosystem I assembly protein Ycf4 (Cyanothece sp. (strain PCC 7425 / ATCC 29141)).